A 332-amino-acid polypeptide reads, in one-letter code: Malate dehydrogenase, cytoplasmic (332 aa).

NAD(+) is bound by residues 11–17 and aspartate 42; that span reads GAAGQIA. Substrate-binding residues include arginine 92 and arginine 98. Residues asparagine 105, glutamine 112, and 129–131 each bind NAD(+); that span reads VGN. Asparagine 131 and arginine 162 together coordinate substrate. Histidine 187 (proton acceptor) is an active-site residue.

It belongs to the LDH/MDH superfamily. MDH type 2 family. As to quaternary structure, homodimer.

The protein localises to the cytoplasm. The enzyme catalyses (S)-malate + NAD(+) = oxaloacetate + NADH + H(+). Its activity is regulated as follows. By arsenate for both the forward and reverse reactions. Its function is as follows. Malate dehydrogenase. Has no activity with NADPH as substrate. Does not show lactate dehydrogenase activity. This Taenia solium (Pork tapeworm) protein is Malate dehydrogenase, cytoplasmic.